The chain runs to 393 residues: Protein TsgA (393 aa).

Transmembrane regions (helical) follow at residues 11–31 (WISF…GMVM), 51–71 (FLNA…EIVP), 78–98 (FGFL…SLAL), 101–121 (TAMF…TFLI), 140–160 (FFSM…AHSI), 162–182 (WYWV…LTFG), 206–226 (IGVL…LGFI), 245–265 (TLVS…SFIL), 273–293 (ILTV…TGTP), 297–317 (AWSI…IITL), 332–352 (FVLT…GPIV), and 361–381 (LLTA…LGFV).

It belongs to the major facilitator superfamily. TsgA family.

The protein localises to the cell inner membrane. This chain is Protein TsgA, found in Shigella boydii serotype 18 (strain CDC 3083-94 / BS512).